Reading from the N-terminus, the 170-residue chain is MLSYYAFIFFAKIMEVALMTIRTVLITRGEKLYGSIIGFIEVTIWLYVTSSVLSGIKDDPIRMVVYALGFTCGNYMGCVIEEKLAIGLLTINVITSESDGKRLAEILRDENVGVTMVDAEGKIEQKKMLIIHAKRKRREEIIRTIEGSDINAMISVNDIKTVYGGYGIRK.

A run of 2 helical transmembrane segments spans residues 1–21 (MLSY…LMTI) and 36–56 (IIGF…LSGI).

This sequence belongs to the UPF0316 family.

The protein resides in the cell membrane. This Clostridium botulinum (strain Loch Maree / Type A3) protein is UPF0316 protein CLK_3798.